The following is a 346-amino-acid chain: Methylthioribose-1-phosphate isomerase (346 aa).

Substrate is bound by residues 48–50, Arg88, and Gln192; that span reads RGA. Asp233 serves as the catalytic Proton donor. 243–244 is a substrate binding site; the sequence is NK.

It belongs to the eIF-2B alpha/beta/delta subunits family. MtnA subfamily.

The catalysed reaction is 5-(methylsulfanyl)-alpha-D-ribose 1-phosphate = 5-(methylsulfanyl)-D-ribulose 1-phosphate. Its pathway is amino-acid biosynthesis; L-methionine biosynthesis via salvage pathway; L-methionine from S-methyl-5-thio-alpha-D-ribose 1-phosphate: step 1/6. Functionally, catalyzes the interconversion of methylthioribose-1-phosphate (MTR-1-P) into methylthioribulose-1-phosphate (MTRu-1-P). This Alcanivorax borkumensis (strain ATCC 700651 / DSM 11573 / NCIMB 13689 / SK2) protein is Methylthioribose-1-phosphate isomerase.